Consider the following 195-residue polypeptide: UPF0167 protein CbrC (195 aa).

It belongs to the UPF0167 family.

The sequence is that of UPF0167 protein CbrC (cbrC) from Escherichia coli (strain K12).